A 246-amino-acid chain; its full sequence is Probable transcriptional regulatory protein CLJ_B3338 (246 aa).

Belongs to the TACO1 family.

It is found in the cytoplasm. The chain is Probable transcriptional regulatory protein CLJ_B3338 from Clostridium botulinum (strain 657 / Type Ba4).